Here is a 262-residue protein sequence, read N- to C-terminus: Nitrilase (262 aa).

The CN hydrolase domain maps to 2-237 (VKVAYVQMNP…EEVGVAEIDL (236 aa)). Residue Glu-42 is the Proton acceptor of the active site. The Proton donor role is filled by Lys-113. The active-site Nucleophile is Cys-146. 173–174 (VM) serves as a coordination point for substrate.

Belongs to the carbon-nitrogen hydrolase superfamily. As to quaternary structure, homodimer.

It carries out the reaction a nitrile + 2 H2O = a carboxylate + NH4(+). Enzymatic activity is inhibited in the presence of acetone, methanol and metal ions such as Ag(2+) and Hg(2+). Is also inhibited by various thiol reagents such as DTNB, p-chloromercuribenzoate, p-hydroxymercuribenzoate, iodacetamide and iodacetate. EDTA has no influence on activity. In terms of biological role, nitrilase that hydrolyzes preferentially aliphatic nitriles like malononitrile and fumaronitrile in vitro. These dinitriles are converted to the corresponding monoacid mononitriles, showing the enzyme is regioselective. Cannot hydrolyze compounds with a nitrile group bound to an aromatic ring or amino acid. Its biological role is unknown. In Pyrococcus abyssi (strain GE5 / Orsay), this protein is Nitrilase.